We begin with the raw amino-acid sequence, 441 residues long: Xaa-Pro dipeptidase (441 aa).

5 residues coordinate Mn(2+): aspartate 244, aspartate 255, histidine 336, glutamate 381, and glutamate 420.

It belongs to the peptidase M24B family. Bacterial-type prolidase subfamily. Requires Mn(2+) as cofactor.

It catalyses the reaction Xaa-L-Pro dipeptide + H2O = an L-alpha-amino acid + L-proline. Splits dipeptides with a prolyl residue in the C-terminal position. The polypeptide is Xaa-Pro dipeptidase (Xanthomonas campestris pv. campestris (strain B100)).